A 504-amino-acid polypeptide reads, in one-letter code: Anaerobic nitric oxide reductase transcription regulator NorR (504 aa).

Residue Asp57 is modified to 4-aspartylphosphate. Positions 187 to 416 constitute a Sigma-54 factor interaction domain; sequence MIGLSPGMTQ…LEHAIHRAVV (230 aa). ATP is bound by residues 215–222 and 278–287; these read GETGTGKE and ADNGTLFLDE. Positions 479 to 498 form a DNA-binding region, H-T-H motif; it reads WAACARMLETDVANLHRLAK.

It functions in the pathway nitrogen metabolism; nitric oxide reduction. Its function is as follows. Required for the expression of anaerobic nitric oxide (NO) reductase, acts as a transcriptional activator for at least the norVW operon. Activation also requires sigma-54. The protein is Anaerobic nitric oxide reductase transcription regulator NorR of Shigella boydii serotype 4 (strain Sb227).